A 430-amino-acid chain; its full sequence is Probable beta-1,3-galactosyl-O-glycosyl-glycoprotein beta-1,6-N-acetylglucosaminyltransferase 7 (430 aa).

Over 1–8 the chain is Cytoplasmic; sequence MSQLRATK. A helical; Signal-anchor for type II membrane protein membrane pass occupies residues 9-25; that stretch reads SGLVVRAVICIFIFLYL. Residues 26 to 430 are Extracellular-facing; it reads RNPTPAESEE…QSHFNMRLNR (405 aa). Cystine bridges form between C53/C205, C139/C354, C160/C187, and C363/C395. The N-linked (GlcNAc...) asparagine glycan is linked to N87. The N-linked (GlcNAc...) asparagine glycan is linked to N272.

It belongs to the glycosyltransferase 14 family.

The protein localises to the golgi apparatus membrane. Its pathway is protein modification; protein glycosylation. Probable glycosyltransferase. The polypeptide is Probable beta-1,3-galactosyl-O-glycosyl-glycoprotein beta-1,6-N-acetylglucosaminyltransferase 7 (Homo sapiens (Human)).